A 1433-amino-acid polypeptide reads, in one-letter code: DNA-directed RNA polymerase subunit beta' (1433 aa).

Positions 66, 68, 81, and 84 each coordinate Zn(2+). Mg(2+) is bound by residues aspartate 473, aspartate 475, and aspartate 477. The Zn(2+) site is built by cysteine 815, cysteine 889, cysteine 896, and cysteine 899.

It belongs to the RNA polymerase beta' chain family. In terms of assembly, the RNAP catalytic core consists of 2 alpha, 1 beta, 1 beta' and 1 omega subunit. When a sigma factor is associated with the core the holoenzyme is formed, which can initiate transcription. Requires Mg(2+) as cofactor. Zn(2+) serves as cofactor.

It carries out the reaction RNA(n) + a ribonucleoside 5'-triphosphate = RNA(n+1) + diphosphate. Functionally, DNA-dependent RNA polymerase catalyzes the transcription of DNA into RNA using the four ribonucleoside triphosphates as substrates. This Porphyromonas gingivalis (strain ATCC BAA-308 / W83) protein is DNA-directed RNA polymerase subunit beta'.